We begin with the raw amino-acid sequence, 647 residues long: Nucleoside triphosphatase I (647 aa).

The Helicase ATP-binding domain occupies phenylalanine 48–lysine 213. Tryptophan 61–threonine 68 contributes to the ATP binding site. Positions aspartate 150–histidine 153 match the DEXH box motif. Residues tyrosine 377–lysine 540 form the Helicase C-terminal domain. The tract at residues aspartate 466–isoleucine 532 is binding to the cap-specific mRNA (nucleoside-2'-O-)-methyltransferase.

This sequence belongs to the helicase family. NPH I subfamily. Monomer. Interacts (via C-terminus) with RAP94 (via N-terminus). Interacts with the cap-specific mRNA (nucleoside-2'-O-)-methyltransferase.

It is found in the virion. The enzyme catalyses a ribonucleoside 5'-triphosphate + H2O = a ribonucleoside 5'-diphosphate + phosphate + H(+). In terms of biological role, DNA-dependent ATPase required for providing the needed energy to achieve the termination of early transcripts. Acts in concert with the RAP94 subunit of the virion RNA polymerase and the capping enzyme/VTF to catalyze release of UUUUUNU-containing nascent RNA from the elongation complex. NPH-I must bind ssDNA in order to exhibit ATPase activity. The sequence is that of Nucleoside triphosphatase I (NPH1) from Melanoplus sanguinipes entomopoxvirus (MsEPV).